Consider the following 417-residue polypeptide: RH-like protein ID (417 aa).

Helical transmembrane passes span 12 to 32 (CLPL…YFFT), 44 to 64 (LVAS…GFGF), 77 to 97 (VAFN…LDGF), 125 to 145 (ISAG…MVLV), 172 to 192 (IYVF…KPLA), 203 to 223 (TIPS…WPSF), 238 to 258 (VFNT…VSSL), 265 to 285 (INMT…ATSC), 287 to 307 (LIPS…ISIG), 331 to 351 (NFSL…VLDT), and 358 to 378 (MVGF…VIAL).

The protein belongs to the ammonium transporter (TC 2.A.49) family. Rh subfamily.

It localises to the membrane. In terms of biological role, may be part of an oligomeric complex which is likely to have a transport or channel function in the erythrocyte membrane. The protein is RH-like protein ID of Gorilla gorilla gorilla (Western lowland gorilla).